The chain runs to 483 residues: GTPase Der (483 aa).

EngA-type G domains follow at residues 3–167 (FTLA…GEER) and 212–387 (LRIA…EIWN). Residues 9–16 (GRPNVGKS), 56–60 (DTAGL), 119–122 (NKAE), 218–225 (GRPNAGKS), 265–269 (DTAGM), and 330–333 (NKWD) each bind GTP. The region spanning 388-472 (RRISTGRLNR…PIRLSLRTSD (85 aa)) is the KH-like domain.

It belongs to the TRAFAC class TrmE-Era-EngA-EngB-Septin-like GTPase superfamily. EngA (Der) GTPase family. Associates with the 50S ribosomal subunit.

In terms of biological role, GTPase that plays an essential role in the late steps of ribosome biogenesis. This chain is GTPase Der, found in Brucella suis biovar 1 (strain 1330).